The following is a 341-amino-acid chain: Heme A synthase (341 aa).

Helical transmembrane passes span Val7–Ile27, Leu92–Lys112, Met118–Phe138, Leu159–Val179, Phe190–Val210, Phe253–Leu273, Leu280–Val300, and Ile302–Met322. His255 contributes to the heme binding site. His308 is a heme binding site.

This sequence belongs to the COX15/CtaA family. Type 2 subfamily. As to quaternary structure, interacts with CtaB. Requires heme b as cofactor.

It is found in the cell membrane. The enzyme catalyses Fe(II)-heme o + 2 A + H2O = Fe(II)-heme a + 2 AH2. It functions in the pathway porphyrin-containing compound metabolism; heme A biosynthesis; heme A from heme O: step 1/1. Its function is as follows. Catalyzes the conversion of heme O to heme A by two successive hydroxylations of the methyl group at C8. The first hydroxylation forms heme I, the second hydroxylation results in an unstable dihydroxymethyl group, which spontaneously dehydrates, resulting in the formyl group of heme A. This chain is Heme A synthase, found in Anaplasma marginale (strain St. Maries).